A 193-amino-acid polypeptide reads, in one-letter code: MSLATLTVLGFSLSADAFAAALGKGAGARRPDLLEAFRVGAYFGAFEAAAPLIGWALGLTFAARIAAFDHWVAFTLLAGVGGHMVIAALRAPKAETAEASKARQKRALSPLRLALAALATSIDATAVGIGLAVTEVNILMACALIGAITTVVAAGGVLLGRGAGPLLGRKAEVLGGLALIGIGLKILIEHLSA.

The next 6 membrane-spanning stretches (helical) occupy residues 3-23, 39-59, 65-85, 113-133, 138-158, and 173-193; these read LATLTVLGFSLSADAFAAALG, VGAYFGAFEAAAPLIGWALGL, IAAFDHWVAFTLLAGVGGHMV, LALAALATSIDATAVGIGLAV, ILMACALIGAITTVVAAGGVL, and VLGGLALIGIGLKILIEHLSA.

It belongs to the MntP (TC 9.B.29) family.

The protein localises to the cell inner membrane. Functionally, probably functions as a manganese efflux pump. The chain is Putative manganese efflux pump MntP from Rhodospirillum rubrum (strain ATCC 11170 / ATH 1.1.1 / DSM 467 / LMG 4362 / NCIMB 8255 / S1).